A 396-amino-acid chain; its full sequence is Homoserine O-acetyltransferase (396 aa).

Residues 53-370 (NAILVCHALT…DRGHDAFLLE (318 aa)) form the AB hydrolase-1 domain. Ser158 serves as the catalytic Nucleophile. A substrate-binding site is contributed by Arg228. Catalysis depends on residues Asp331 and His364. Asp365 lines the substrate pocket.

The protein belongs to the AB hydrolase superfamily. MetX family. Homodimer.

It is found in the cytoplasm. It carries out the reaction L-homoserine + acetyl-CoA = O-acetyl-L-homoserine + CoA. Its pathway is amino-acid biosynthesis; L-methionine biosynthesis via de novo pathway; O-acetyl-L-homoserine from L-homoserine: step 1/1. Its function is as follows. Transfers an acetyl group from acetyl-CoA to L-homoserine, forming acetyl-L-homoserine. The chain is Homoserine O-acetyltransferase from Gluconobacter oxydans (strain 621H) (Gluconobacter suboxydans).